Reading from the N-terminus, the 265-residue chain is Sulfur carrier protein FdhD (265 aa).

The active-site Cysteine persulfide intermediate is cysteine 107.

This sequence belongs to the FdhD family.

It is found in the cytoplasm. In terms of biological role, required for formate dehydrogenase (FDH) activity. Acts as a sulfur carrier protein that transfers sulfur from IscS to the molybdenum cofactor prior to its insertion into FDH. The protein is Sulfur carrier protein FdhD of Staphylococcus aureus (strain JH9).